Consider the following 310-residue polypeptide: MPKVRTKDIMEQFHLELVSGEEGINRPITISDLSRPGIEMAGYFTYYPKERVQLLGKTELSFFEQLPERERKQRMMSLCTDITPAIILSRDREVPKELIEASNENGVPVLRSSLKTTRLSSRLTNFLESKLAPTTAIHGVLVDVYGVGVLLIGKSGVGKSETALELVKRGHRLVADDCVEIRQEDQDTLVGSAPELIEHLLEIRGLGIINVMTLFGAGAVRSYKRITIVMNLELWEQGKQYDRLGLEEEKMRIIDTDVPKLTIPVRPGRNLAVIIEVAAMNFRLKRMGHNAAEQFTSKLADVIEDNGQDE.

Catalysis depends on residues His138 and Lys159. Residue 153-160 (GKSGVGKS) coordinates ATP. Residue Ser160 coordinates Mg(2+). Asp177 functions as the Proton acceptor; for phosphorylation activity. Proton donor; for dephosphorylation activity in the catalytic mechanism. The tract at residues 201-210 (LEIRGLGIIN) is important for the catalytic mechanism of both phosphorylation and dephosphorylation. Glu202 contributes to the Mg(2+) binding site. Residue Arg243 is part of the active site. Positions 264–269 (PVRPGR) are important for the catalytic mechanism of dephosphorylation.

The protein belongs to the HPrK/P family. Homohexamer. Mg(2+) is required as a cofactor.

It catalyses the reaction [HPr protein]-L-serine + ATP = [HPr protein]-O-phospho-L-serine + ADP + H(+). The enzyme catalyses [HPr protein]-O-phospho-L-serine + phosphate + H(+) = [HPr protein]-L-serine + diphosphate. Its function is as follows. Catalyzes the ATP- as well as the pyrophosphate-dependent phosphorylation of a specific serine residue in HPr, a phosphocarrier protein of the phosphoenolpyruvate-dependent sugar phosphotransferase system (PTS). HprK/P also catalyzes the pyrophosphate-producing, inorganic phosphate-dependent dephosphorylation (phosphorolysis) of seryl-phosphorylated HPr (P-Ser-HPr). The two antagonistic activities of HprK/P are regulated by several intracellular metabolites, which change their concentration in response to the absence or presence of rapidly metabolisable carbon sources (glucose, fructose, etc.) in the growth medium. Also phosphorylates/dephosphorylates the HPr-like catabolite repression protein crh on a specific serine residue. Therefore, by controlling the phosphorylation state of HPr and crh, HPrK/P is a sensor enzyme that plays a major role in the regulation of carbon metabolism and sugar transport: it mediates carbon catabolite repression (CCR), and regulates PTS-catalyzed carbohydrate uptake and inducer exclusion. In Bacillus pumilus (strain SAFR-032), this protein is HPr kinase/phosphorylase.